Consider the following 334-residue polypeptide: Protein-methionine-sulfoxide reductase catalytic subunit MsrP (334 aa).

The tat-type signal signal peptide spans 1–44 (MKKNQFLKESDVTAESVFFMKRRQVLKALGISAAALSLPHAAHA). Residues Asn88, 91–92 (YE), Cys146, Thr181, Asn233, Arg238, and 249–251 (GIK) each bind Mo-molybdopterin.

It belongs to the MsrP family. In terms of assembly, heterodimer of a catalytic subunit (MsrP) and a heme-binding subunit (MsrQ). The cofactor is Mo-molybdopterin. Post-translationally, predicted to be exported by the Tat system. The position of the signal peptide cleavage has not been experimentally proven.

It localises to the periplasm. The catalysed reaction is L-methionyl-[protein] + a quinone + H2O = L-methionyl-(S)-S-oxide-[protein] + a quinol. It carries out the reaction L-methionyl-[protein] + a quinone + H2O = L-methionyl-(R)-S-oxide-[protein] + a quinol. Part of the MsrPQ system that repairs oxidized periplasmic proteins containing methionine sulfoxide residues (Met-O), using respiratory chain electrons. Thus protects these proteins from oxidative-stress damage caused by reactive species of oxygen and chlorine generated by the host defense mechanisms. MsrPQ is essential for the maintenance of envelope integrity under bleach stress, rescuing a wide series of structurally unrelated periplasmic proteins from methionine oxidation, including the primary periplasmic chaperone SurA and the lipoprotein Pal. The catalytic subunit MsrP is non-stereospecific, being able to reduce both (R-) and (S-) diastereoisomers of methionine sulfoxide. The chain is Protein-methionine-sulfoxide reductase catalytic subunit MsrP from Escherichia coli (strain UTI89 / UPEC).